Consider the following 29-residue polypeptide: Cytochrome b6-f complex subunit 8 (29 aa).

The chain crosses the membrane as a helical span at residues 3-23 (TVSLAWAALMVVFTFSLSLVV).

Belongs to the PetN family. As to quaternary structure, the 4 large subunits of the cytochrome b6-f complex are cytochrome b6, subunit IV (17 kDa polypeptide, PetD), cytochrome f and the Rieske protein, while the 4 small subunits are PetG, PetL, PetM and PetN. The complex functions as a dimer.

The protein localises to the plastid. It localises to the chloroplast thylakoid membrane. Functionally, component of the cytochrome b6-f complex, which mediates electron transfer between photosystem II (PSII) and photosystem I (PSI), cyclic electron flow around PSI, and state transitions. The protein is Cytochrome b6-f complex subunit 8 of Chloranthus spicatus (Chulantree).